We begin with the raw amino-acid sequence, 285 residues long: Inositol oxygenase (285 aa).

Arginine 29 serves as a coordination point for substrate. Residue serine 33 is modified to Phosphoserine. 85-87 (DES) lines the substrate pocket. Fe cation contacts are provided by histidine 98, histidine 123, and aspartate 124. Residues lysine 127 and 141–142 (GD) each bind substrate. Residues histidine 194, histidine 220, and aspartate 253 each coordinate Fe cation. Position 220–221 (220–221 (HS)) interacts with substrate.

This sequence belongs to the myo-inositol oxygenase family. Fe cation serves as cofactor.

Its subcellular location is the cytoplasm. It carries out the reaction myo-inositol + O2 = D-glucuronate + H2O + H(+). Its pathway is polyol metabolism; myo-inositol degradation into D-glucuronate; D-glucuronate from myo-inositol: step 1/1. The sequence is that of Inositol oxygenase (MIOX) from Pongo abelii (Sumatran orangutan).